The sequence spans 846 residues: Protein kintoun (846 aa).

Disordered stretches follow at residues 1–21 (MSTA…ERAD), 372–416 (YLSR…PALT), 581–657 (HTSI…DSTI), and 743–846 (HDSS…DDEI). Position 378 is a phosphoserine (Ser378). The span at 389–403 (PVEDDADGDMPETPE) shows a compositional bias: acidic residues. 2 stretches are compositionally biased toward basic residues: residues 596 to 612 (LHKK…KKQR) and 750 to 766 (QRKK…RAQQ). A Phosphoserine modification is found at Ser770. Residues 821–832 (TRQDHADADAKN) show a composition bias toward basic and acidic residues.

This sequence belongs to the PIH1 family. Kintoun subfamily. In terms of assembly, interacts with Pp1alpha-96A, Pp1-87B, Pp1-13C and flw.

It is found in the cytoplasm. Functionally, required for cytoplasmic pre-assembly of axonemal dyneins, thereby playing a central role in motility in cilia and flagella. Involved in pre-assembly of dynein arm complexes in the cytoplasm before intraflagellar transport loads them for the ciliary compartment. The sequence is that of Protein kintoun from Drosophila persimilis (Fruit fly).